The sequence spans 131 residues: Sperm microtubule inner protein 11 (131 aa).

The segment at 18-44 (KKRNTTEETNQKEPEPTRLPPIISKDG) is disordered. Basic and acidic residues predominate over residues 21-33 (NTTEETNQKEPEP).

As to quaternary structure, microtubule inner protein component of sperm flagellar doublet microtubules.

The protein localises to the cytoplasm. It is found in the cytoskeleton. It localises to the flagellum axoneme. Microtubule inner protein (MIP) part of the dynein-decorated doublet microtubules (DMTs) in flagellum axoneme. May serve to reinforce and thus stabilize the microtubule structure in the sperm flagella. The protein is Sperm microtubule inner protein 11 of Homo sapiens (Human).